A 145-amino-acid polypeptide reads, in one-letter code: DNA polymerase epsilon subunit 3 (145 aa).

An N-acetylalanine modification is found at Ala-2. Thr-83 is subject to Phosphothreonine. The stretch at 85 to 144 (LKEALEAYRREQKGKKEASEQKKKDKDKKDCEEQDKSREEEDEDEERLDEEEQNEEEEVD) forms a coiled coil. The span at 93 to 123 (RREQKGKKEASEQKKKDKDKKDCEEQDKSRE) shows a compositional bias: basic and acidic residues. A disordered region spans residues 93-145 (RREQKGKKEASEQKKKDKDKKDCEEQDKSREEEDEDEERLDEEEQNEEEEVDN). Ser-121 bears the Phosphoserine mark. Acidic residues predominate over residues 124–145 (EEDEDEERLDEEEQNEEEEVDN).

As to quaternary structure, component of the DNA polymerase epsilon complex consisting of four subunits: the catalytic subunit POLE and the accessory subunits POLE2, POLE3 and POLE4. Interaction with POLE4 is a prerequisite for further binding with POLE and POLE2. Heterodimer with CHRAC1; binds to DNA. Component of the CHRAC ISWI chromatin remodeling complex at least composed of SMARCA5/SNF2H, BAZ1A/ACF1, CHRAC1 and POLE3; the complex preferentially binds DNA through the CHRAC1-POLE3 heterodimer and possesses ATP-dependent nucleosome-remodeling activity. Within the complex, the heterodimer with CHRAC1 interacts with SMARCA5/SNF2H; the interaction is direct and enhances nucleosome sliding activity by the SMARCA5/SNF2H and BAZ1A/ACF1 interaction. Within the complex, the heterodimer with CHRAC1 interacts with BAZ1A/ACF1; the interactions are direct.

Its subcellular location is the nucleus. In terms of biological role, accessory component of the DNA polymerase epsilon complex. Participates in DNA repair and in chromosomal DNA replication. Forms a complex with CHRAC1 and binds naked DNA, which is then incorporated into chromatin, aided by the nucleosome-remodeling activity of ISWI/SNF2H and ACF1. Does not enhance nucleosome sliding activity of the ACF-5 ISWI chromatin remodeling complex. In Rattus norvegicus (Rat), this protein is DNA polymerase epsilon subunit 3 (Pole3).